Here is a 293-residue protein sequence, read N- to C-terminus: D-alanine--D-alanine ligase (293 aa).

An ATP-grasp domain is found at K98–N291. Residue D124 to T177 coordinates ATP. Residues D245, E258, and N260 each contribute to the Mg(2+) site.

This sequence belongs to the D-alanine--D-alanine ligase family. It depends on Mg(2+) as a cofactor. Requires Mn(2+) as cofactor.

The protein localises to the cytoplasm. It carries out the reaction 2 D-alanine + ATP = D-alanyl-D-alanine + ADP + phosphate + H(+). Its pathway is cell wall biogenesis; peptidoglycan biosynthesis. Cell wall formation. This chain is D-alanine--D-alanine ligase, found in Ruthia magnifica subsp. Calyptogena magnifica.